Here is a 66-residue protein sequence, read N- to C-terminus: Hirudin-PA (66 aa).

The tract at residues 1–3 is interaction with thrombin active site; that stretch reads ITY. 3 cysteine pairs are disulfide-bonded: C6–C14, C16–C28, and C22–C39. The tract at residues 39-66 is disordered; sequence CVTGEGTPKPQSHNQGDFEPIPEDAYDE. O-linked (GalNAc...) threonine glycosylation is present at T45. Residues 55–66 are interaction with fibrinogen-binding exosite of thrombin; it reads DFEPIPEDAYDE. Y64 carries the sulfotyrosine modification.

The protein belongs to the protease inhibitor I14 (hirudin) family.

It localises to the secreted. Functionally, hirudin is a potent thrombin-specific protease inhibitor. It forms a stable non-covalent complex with alpha-thrombin, thereby abolishing its ability to cleave fibrinogen. This Hirudo medicinalis (Medicinal leech) protein is Hirudin-PA.